The sequence spans 426 residues: uncharacterized protein (426 aa).

3 Solcar repeats span residues 125 to 216 (KNNV…MKRV), 226 to 315 (HSPL…LKRT), and 334 to 422 (PNGL…CKKW). Transmembrane regions (helical) follow at residues 130–151 (YFIS…LDRL), 193–213 (GINV…YEAM), 229–249 (LYSY…IYPV), 290–310 (GVLV…GTFE), 336–356 (GLVM…VFPL), and 394–415 (LYKG…SYLV).

It belongs to the mitochondrial carrier (TC 2.A.29) family.

The protein resides in the mitochondrion inner membrane. This is an uncharacterized protein from Schizosaccharomyces pombe (strain 972 / ATCC 24843) (Fission yeast).